We begin with the raw amino-acid sequence, 242 residues long: Phosphatidylethanolamine-binding protein 4 (242 aa).

Positions Met1–Thr26 are cleaved as a signal peptide. Positions Glu31 to Arg50 are disordered. Residues Glu38–Arg50 show a composition bias toward gly residues. N-linked (GlcNAc...) asparagine glycosylation is found at Asn77 and Asn139. Residues Asp210–Lys242 form an important for secretion region.

This sequence belongs to the phosphatidylethanolamine-binding protein family.

The protein localises to the secreted. Functionally, promotes AKT phosphorylation, suggesting a possible role in the PI3K-AKT signaling pathway. The polypeptide is Phosphatidylethanolamine-binding protein 4 (Pebp4) (Mus musculus (Mouse)).